A 331-amino-acid chain; its full sequence is Reticulocalbin-1 (331 aa).

An N-terminal signal peptide occupies residues 1-29 (MARGGRGRRLGLALGLLLALVLAPRVLRA). Residue Asn-53 is glycosylated (N-linked (GlcNAc...) asparagine). The residue at position 55 (Ser-55) is a Phosphoserine. Thr-76 bears the Phosphothreonine mark. 6 consecutive EF-hand domains span residues 79–114 (ESKERLGKIVDRIDNDGDGFVTTEELKTWIKRVQKR), 115–150 (YIFDNVAKVWKDYDRDKDDKISWEEYKQATYGYYLG), 166–201 (KMLPRDERRFKAADLNGDLTATREEFTAFLHPEEFE), 203–238 (MKEIVVLETLEDIDKNGDGFVDQDEYIADMFSHEEN), 244–279 (WVLSEREQFNEFRDLNKDGKLDKDEIRHWILPQDYD), and 280–315 (HAQAEARHLVYESDKNKDEKLTKEEILENWNMFVGS). Ser-80 is modified (phosphoserine; by FAM20C). Asp-92, Asp-94, Asp-96, Glu-103, Asp-128, Asp-130, Asp-132, Lys-134, Glu-139, Asp-179, Asn-181, Asp-183, Thr-185, Glu-190, Asp-216, Asn-218, Asp-220, Glu-227, Asp-257, Asn-259, Asp-261, Lys-263, Glu-268, Asp-293, Asn-295, Asp-297, Lys-299, and Glu-304 together coordinate Ca(2+). The Prevents secretion from ER motif lies at 328 to 331 (HDEL).

This sequence belongs to the CREC family. Post-translationally, O-glycosylated. O-mannosylated by POMT1 and POMT2 and elongated by POMGNT1.

The protein localises to the endoplasmic reticulum lumen. May regulate calcium-dependent activities in the endoplasmic reticulum lumen or post-ER compartment. This Homo sapiens (Human) protein is Reticulocalbin-1 (RCN1).